The sequence spans 588 residues: Aspartate--tRNA ligase (588 aa).

L-aspartate is bound at residue E174. Residues 198–201 (QLFK) are aspartate. R220 contributes to the L-aspartate binding site. ATP is bound by residues 220–222 (RDE) and Q229. H448 provides a ligand contact to L-aspartate. An ATP-binding site is contributed by E482. R489 is a binding site for L-aspartate. Residue 534–537 (GIDR) participates in ATP binding.

The protein belongs to the class-II aminoacyl-tRNA synthetase family. Type 1 subfamily. As to quaternary structure, homodimer.

It is found in the cytoplasm. The catalysed reaction is tRNA(Asp) + L-aspartate + ATP = L-aspartyl-tRNA(Asp) + AMP + diphosphate. Functionally, catalyzes the attachment of L-aspartate to tRNA(Asp) in a two-step reaction: L-aspartate is first activated by ATP to form Asp-AMP and then transferred to the acceptor end of tRNA(Asp). The polypeptide is Aspartate--tRNA ligase (Xanthomonas campestris pv. campestris (strain B100)).